The sequence spans 411 residues: Multidrug resistance protein MdtG (411 aa).

10 helical membrane passes run 14–34 (LFVAWLGCFLTGAAFSLIMPF), 56–76 (LVFSITFLFSAIASPFWGGLA), 89–109 (ALGMSIVMLLMGMAQNIWQFL), 113–133 (AVLGLLGGFIPNANALIATQV), 144–164 (TLSTGGVSGALIGPLIGGLLA), 171–191 (PVFYITAGVLLTCFVLTLLYV), 219–239 (ILSLFVTTMIIQIATGSIAPI), 254–274 (LAFVSGLIASVPGVAALMSAP), 288–308 (ILVFMLIVSVLLLIPMAFVQT), and 376–396 (AVFCVTALVVLFNAVYSWWCL).

This sequence belongs to the major facilitator superfamily. DHA1 family. MdtG (TC 2.A.1.2.20) subfamily.

It is found in the cell inner membrane. This is Multidrug resistance protein MdtG from Serratia proteamaculans (strain 568).